A 240-amino-acid polypeptide reads, in one-letter code: Large ribosomal subunit protein bL25 (240 aa).

Disordered stretches follow at residues 1–20 (MAENVLSAQKRTEQGKGPAR) and 220–240 (PAAGAAPAKGGEAKGGDKGKK). Low complexity predominate over residues 220-229 (PAAGAAPAKG). The span at 230–240 (GEAKGGDKGKK) shows a compositional bias: basic and acidic residues.

The protein belongs to the bacterial ribosomal protein bL25 family. CTC subfamily. In terms of assembly, part of the 50S ribosomal subunit; part of the 5S rRNA/L5/L18/L25 subcomplex. Contacts the 5S rRNA. Binds to the 5S rRNA independently of L5 and L18.

This is one of the proteins that binds to the 5S RNA in the ribosome where it forms part of the central protuberance. The polypeptide is Large ribosomal subunit protein bL25 (Anaeromyxobacter dehalogenans (strain 2CP-C)).